The sequence spans 906 residues: Transmembrane channel-like protein 2 (906 aa).

A disordered region spans residues 1 to 150; sequence MSHQVKGLKE…SASGGESLSE (150 aa). Topologically, residues 1 to 263 are cytoplasmic; sequence MSHQVKGLKE…IFLRWMYGVN (263 aa). Residues 69-79 show a composition bias toward basic residues; that stretch reads PRRKQTGRRRH. A compositionally biased stretch (basic and acidic residues) spans 80–127; that stretch reads REELGEQERGEAERTCEGRRKRDERASFQERTAAPKREKEIPRREEKS. Over residues 135–147 the composition is skewed to low complexity; sequence SSSLASSASGGES. Residues 264–284 form a helical membrane-spanning segment; sequence LVLFGLIFGLVIIPEVLMGMP. Residues 285 to 336 are Extracellular-facing; that stretch reads YGSIPRKTVPRAEEEKAMDFSVLWDFEGYIKYSALFYGYYNNQRTIGWLRYR. The chain crosses the membrane as a helical span at residues 337–357; it reads LPMAYFMVGVSVFGYSLIIVI. At 358–431 the chain is on the cytoplasmic side; sequence RSMASNTQGS…NIHLTRFLRV (74 aa). Residues 432–452 form a helical membrane-spanning segment; the sequence is LANFLIICCLCGSGYLIYFVV. The Extracellular segment spans residues 453-508; the sequence is KRSQQFSKMQNVSWYERNEVEIVMSLLGMFCPPLFETIAALENYHPRTGLKWQLGR. A helical transmembrane segment spans residues 509-529; the sequence is IFALFLGNLYTFLLALMDDVH. The Cytoplasmic portion of the chain corresponds to 530–693; the sequence is LKLANEETIK…RVFKASRSNN (164 aa). Residues 694-714 form a helical membrane-spanning segment; it reads FYMGLLLLVLFLSLLPVAYTI. The Extracellular segment spans residues 715 to 750; it reads MSLPPSFDCGPFSGKNRMYDVLQETIENDFPTFLGK. The helical transmembrane segment at 751 to 771 threads the bilayer; sequence IFAFLANPGLIIPAILLMFLA. Residues 772 to 906 lie on the Cytoplasmic side of the membrane; it reads IYYLNSVSKS…SGKSAQRPPH (135 aa). The tract at residues 800-906 is disordered; the sequence is EKSHKSVKGK…SGKSAQRPPH (107 aa). Polar residues-rich tracts occupy residues 820-846, 854-866, and 886-900; these read KSSS…QSQA, PGTS…TTLP, and APSQ…SGKS.

Belongs to the TMC family. As to quaternary structure, forms the MET channel composed of TMC dimer (TMC1 or TMC2), TMIE, TOMT, CIB (CIB2 or CIB3), LHFPL5 and PDH15. The interaction of TMC1 and TMC2 with TOMT is required for the transportation of TMC1/2 into the stereocilia of hair cells. Interacts (via N-terminus) with both isoforms CD1 and CD3 of PCDH15. Can form a heterodimer with TMC1, TMC5 or TMC7. Detected in fetal cochlea.

It is found in the cell membrane. It carries out the reaction Ca(2+)(in) = Ca(2+)(out). In terms of biological role, pore-forming subunit of the mechanotransducer (MET) non-selective cation channel complex located at the tips of stereocilia of cochlear hair cells and that mediates sensory transduction in the auditory system. The MET complex is composed of two dimeric pore-forming ion-conducting transmembrane TMC (TMC1 or TMC2) subunits, and aided by several auxiliary proteins including LHFPL5, TMIE, CIB2/3 and TOMT, and the tip-link PCDH15. MET channel is activated by tension in the tip-link extending from the side wall of one stereocilium to the tip of the adjacent shorter stereocilium, where the channel is located. TMC2 MET channel is highly permeable to calcium and likely transports monovalent cations. Also involved in vestibular hair cell transduction current of the mammalian inner ear. In Homo sapiens (Human), this protein is Transmembrane channel-like protein 2.